Reading from the N-terminus, the 388-residue chain is Mannitol-1-phosphate 5-dehydrogenase (388 aa).

NAD(+) is bound at residue 5 to 16 (AIQFGGGNIGRG). The active site involves Lys213.

This sequence belongs to the mannitol dehydrogenase family. In terms of assembly, monomer.

It carries out the reaction D-mannitol 1-phosphate + NAD(+) = beta-D-fructose 6-phosphate + NADH + H(+). Its function is as follows. Catalyzes the NAD(H)-dependent interconversion of D-fructose 6-phosphate and D-mannitol 1-phosphate in the mannitol metabolic pathway. This is Mannitol-1-phosphate 5-dehydrogenase (mpdA) from Aspergillus fumigatus (strain CBS 144.89 / FGSC A1163 / CEA10) (Neosartorya fumigata).